Reading from the N-terminus, the 573-residue chain is Adenine deaminase 2 (573 aa).

This sequence belongs to the metallo-dependent hydrolases superfamily. Adenine deaminase family. Mn(2+) serves as cofactor.

It carries out the reaction adenine + H2O + H(+) = hypoxanthine + NH4(+). This chain is Adenine deaminase 2, found in Shouchella clausii (strain KSM-K16) (Alkalihalobacillus clausii).